A 166-amino-acid polypeptide reads, in one-letter code: Putative transcriptional regulatory protein for hcr operon (166 aa).

Residues 1-155 (MRKHRGKPAN…LIGLLKRLYR (155 aa)) form the HTH marR-type domain.

Its function is as follows. May be involved in the regulation of genes for 4-hydroxybenzoyl-CoA reductase. The sequence is that of Putative transcriptional regulatory protein for hcr operon from Thauera aromatica.